Here is a 258-residue protein sequence, read N- to C-terminus: Ribosomal RNA small subunit methyltransferase J (258 aa).

S-adenosyl-L-methionine-binding positions include 107 to 108 (RD), 123 to 124 (ER), 159 to 160 (SS), and D177.

Belongs to the methyltransferase superfamily. RsmJ family.

Its subcellular location is the cytoplasm. It carries out the reaction guanosine(1516) in 16S rRNA + S-adenosyl-L-methionine = N(2)-methylguanosine(1516) in 16S rRNA + S-adenosyl-L-homocysteine + H(+). Specifically methylates the guanosine in position 1516 of 16S rRNA. This Shewanella sediminis (strain HAW-EB3) protein is Ribosomal RNA small subunit methyltransferase J.